We begin with the raw amino-acid sequence, 198 residues long: Ribonuclease HII (198 aa).

The 189-residue stretch at Gln10–Ser198 folds into the RNase H type-2 domain. A divalent metal cation contacts are provided by Asp16, Glu17, and Asp108.

Belongs to the RNase HII family. Requires Mn(2+) as cofactor. The cofactor is Mg(2+).

It is found in the cytoplasm. It carries out the reaction Endonucleolytic cleavage to 5'-phosphomonoester.. Its function is as follows. Endonuclease that specifically degrades the RNA of RNA-DNA hybrids. The chain is Ribonuclease HII from Escherichia coli O45:K1 (strain S88 / ExPEC).